The following is a 174-amino-acid chain: Crossover junction endodeoxyribonuclease RuvC (174 aa).

Active-site residues include Asp8, Glu67, and Asp139. Mg(2+) contacts are provided by Asp8, Glu67, and Asp139.

This sequence belongs to the RuvC family. Homodimer which binds Holliday junction (HJ) DNA. The HJ becomes 2-fold symmetrical on binding to RuvC with unstacked arms; it has a different conformation from HJ DNA in complex with RuvA. In the full resolvosome a probable DNA-RuvA(4)-RuvB(12)-RuvC(2) complex forms which resolves the HJ. Mg(2+) serves as cofactor.

The protein localises to the cytoplasm. The catalysed reaction is Endonucleolytic cleavage at a junction such as a reciprocal single-stranded crossover between two homologous DNA duplexes (Holliday junction).. Its function is as follows. The RuvA-RuvB-RuvC complex processes Holliday junction (HJ) DNA during genetic recombination and DNA repair. Endonuclease that resolves HJ intermediates. Cleaves cruciform DNA by making single-stranded nicks across the HJ at symmetrical positions within the homologous arms, yielding a 5'-phosphate and a 3'-hydroxyl group; requires a central core of homology in the junction. The consensus cleavage sequence is 5'-(A/T)TT(C/G)-3'. Cleavage occurs on the 3'-side of the TT dinucleotide at the point of strand exchange. HJ branch migration catalyzed by RuvA-RuvB allows RuvC to scan DNA until it finds its consensus sequence, where it cleaves and resolves the cruciform DNA. The polypeptide is Crossover junction endodeoxyribonuclease RuvC (Pseudomonas paraeruginosa (strain DSM 24068 / PA7) (Pseudomonas aeruginosa (strain PA7))).